The primary structure comprises 325 residues: Beta-1,3-galactosyltransferase 6 (325 aa).

Over 1–11 (MKVFRRAWRHR) the chain is Cytoplasmic. Residues 12–30 (VALGLGGLAFCGTTLLYLA) form a helical; Signal-anchor for type II membrane protein membrane-spanning segment. Over 31 to 325 (RCASEGETPS…QCCQRKEGVP (295 aa)) the chain is Lumenal. A glycan (N-linked (GlcNAc...) asparagine) is linked at asparagine 127.

It belongs to the glycosyltransferase 31 family. Mn(2+) serves as cofactor.

It is found in the golgi apparatus. The protein localises to the golgi stack membrane. It catalyses the reaction 3-O-(beta-D-galactosyl-(1-&gt;4)-beta-D-xylosyl)-L-seryl-[protein] + UDP-alpha-D-galactose = 3-O-(beta-D-galactosyl-(1-&gt;3)-beta-D-galactosyl-(1-&gt;4)-beta-D-xylosyl)-L-seryl-[protein] + UDP + H(+). Its pathway is glycan metabolism; chondroitin sulfate biosynthesis. It participates in glycan metabolism; heparan sulfate biosynthesis. Functionally, beta-1,3-galactosyltransferase that transfers galactose from UDP-galactose to substrates with a terminal beta-linked galactose residue. Has a preference for galactose-beta-1,4-xylose that is found in the linker region of glycosaminoglycans, such as heparan sulfate and chondroitin sulfate. Has no activity towards substrates with terminal glucosamine or galactosamine residues. The sequence is that of Beta-1,3-galactosyltransferase 6 (B3galt6) from Mus musculus (Mouse).